The chain runs to 295 residues: Ribosomal RNA small subunit methyltransferase A (295 aa).

6 residues coordinate S-adenosyl-L-methionine: Asn29, Leu31, Gly56, Glu77, Asp102, and Asn128.

The protein belongs to the class I-like SAM-binding methyltransferase superfamily. rRNA adenine N(6)-methyltransferase family. RsmA subfamily.

The protein localises to the cytoplasm. The enzyme catalyses adenosine(1518)/adenosine(1519) in 16S rRNA + 4 S-adenosyl-L-methionine = N(6)-dimethyladenosine(1518)/N(6)-dimethyladenosine(1519) in 16S rRNA + 4 S-adenosyl-L-homocysteine + 4 H(+). Specifically dimethylates two adjacent adenosines (A1518 and A1519) in the loop of a conserved hairpin near the 3'-end of 16S rRNA in the 30S particle. May play a critical role in biogenesis of 30S subunits. The chain is Ribosomal RNA small subunit methyltransferase A from Listeria innocua serovar 6a (strain ATCC BAA-680 / CLIP 11262).